Here is a 447-residue protein sequence, read N- to C-terminus: Serine/threonine-protein phosphatase 2A 55 kDa regulatory subunit B delta isoform (447 aa).

WD repeat units lie at residues 26 to 65 (AEAD…KSRP), 91 to 132 (EIEE…KRVE), 175 to 213 (AHTY…RSFN), 224 to 264 (ELTE…LCDR), 283 to 321 (EIIS…RPVE), 338 to 379 (ENDC…DITL), and 414 to 447 (DFNK…DKVN).

Belongs to the phosphatase 2A regulatory subunit B family. As to quaternary structure, PP2A consists of a common heterodimeric core enzyme, composed of a 36 kDa catalytic subunit (subunit C) and a 65 kDa constant regulatory subunit (PR65 or subunit A), that associates with a variety of regulatory subunits. Proteins that associate with the core dimer include three families of regulatory subunits B (the R2/B/PR55/B55, R3/B''/PR72/PR130/PR59 and R5/B'/B56 families), the 48 kDa variable regulatory subunit, viral proteins, and cell signaling molecules. Interacts with ensa (when phosphorylated at 'Ser-67') and arpp19 (when phosphorylated at 'Ser-67'), leading to inhibit PP2A activity.

It localises to the cytoplasm. Functionally, substrate-recognition subunit of protein phosphatase 2A (PP2A) that plays a key role in cell cycle by controlling mitosis entry and exit. The activity of PP2A complexes containing ppp2r2d (PR55-delta) fluctuate during the cell cycle: the activity is high in interphase and low in mitosis. During mitosis, activity of PP2A is inhibited via interaction with phosphorylated ensa and arpp19 inhibitors. PP2A complexes containing ppp2r2d (PR55-delta) also regulate the activity of TGF-beta/Activin/Nodal signaling by restricting receptor activity. Within the PP2A complexes, the B regulatory subunits modulate substrate selectivity and catalytic activity, and may also direct the localization of the catalytic enzyme to a particular subcellular compartment. In Xenopus laevis (African clawed frog), this protein is Serine/threonine-protein phosphatase 2A 55 kDa regulatory subunit B delta isoform (ppp2r2d).